Reading from the N-terminus, the 217-residue chain is MGQKVHPIGMRVGIIRDWDAKWYAEKEYADYLHEDLAIRKFINKELAEASVSTIEIERAVNKVIVSLHTAKPGMVIGKGGANVDALRAQLNKLTGKQVHINIIEIKQPDLDAHLVGENIARQLEQRVAFRRAQKQAIQRTMRAGAKGIKTQVSGRLNGADIARSEGYSEGTVPLHTLRADIDYAWEEADTTYGKLGVKVWIYRGEVLPARKNTKGGK.

Residues 38 to 106 (IRKFINKELA…QVHINIIEIK (69 aa)) form the KH type-2 domain.

Belongs to the universal ribosomal protein uS3 family. Part of the 30S ribosomal subunit. Forms a tight complex with proteins S10 and S14.

Its function is as follows. Binds the lower part of the 30S subunit head. Binds mRNA in the 70S ribosome, positioning it for translation. This Streptococcus equi subsp. equi (strain 4047) protein is Small ribosomal subunit protein uS3.